We begin with the raw amino-acid sequence, 490 residues long: MDNKNFQSKTGFNLENTYLTLPNIFFSEQNPKGSKNPKLIKFNTSLAEELGLNEEVLNSDFGLNIFAGNETFPGIVPIAQAYAGHQFGHFTMLGDGRALLLGEHVTKDSKRYDVQLKGSGRTIYSRGGDGKAALAPMLREYIISEGMHGLGIPTTRSLAVVNTGEEVLRERFEQGAILTRIASSHIRVGTFAYAAQWGTLEDLKSLADYTIKRHFPNIAKSENKYILFLEEVINRQAELIVKWQSVGFIHGVMNTDNMVISGETIDYGPCAFMDTYDTNTVFSSIDYAGRYAYGNQPNMALWNLARFSEALLPLLNPNLDEAVNIAKKSISNFSKLYKKYWFNKMRAKLGLFTEKENDELLIEGLLSTMQKYEADFTNTFVSLTLNKFEDEKVFSSDEFKTWYALWQNRLKEENRSQEEVRNLMMNNNPYIIPRNHLVEKALKNAEKGDFTFMDNLLEALKNPYSYSKDLEKYTKLPEKSDTPYVTYCGT.

ATP is bound by residues Gly94, Gly96, Arg97, Lys117, Asp129, Gly130, Arg180, and Arg187. Asp256 functions as the Proton acceptor in the catalytic mechanism. The Mg(2+) site is built by Asn257 and Asp266. Asp266 is a binding site for ATP.

Belongs to the SELO family. The cofactor is Mg(2+). Mn(2+) serves as cofactor.

The enzyme catalyses L-seryl-[protein] + ATP = 3-O-(5'-adenylyl)-L-seryl-[protein] + diphosphate. The catalysed reaction is L-threonyl-[protein] + ATP = 3-O-(5'-adenylyl)-L-threonyl-[protein] + diphosphate. It carries out the reaction L-tyrosyl-[protein] + ATP = O-(5'-adenylyl)-L-tyrosyl-[protein] + diphosphate. It catalyses the reaction L-histidyl-[protein] + UTP = N(tele)-(5'-uridylyl)-L-histidyl-[protein] + diphosphate. The enzyme catalyses L-seryl-[protein] + UTP = O-(5'-uridylyl)-L-seryl-[protein] + diphosphate. The catalysed reaction is L-tyrosyl-[protein] + UTP = O-(5'-uridylyl)-L-tyrosyl-[protein] + diphosphate. Its function is as follows. Nucleotidyltransferase involved in the post-translational modification of proteins. It can catalyze the addition of adenosine monophosphate (AMP) or uridine monophosphate (UMP) to a protein, resulting in modifications known as AMPylation and UMPylation. The protein is Protein nucleotidyltransferase YdiU of Clostridium perfringens (strain ATCC 13124 / DSM 756 / JCM 1290 / NCIMB 6125 / NCTC 8237 / Type A).